A 72-amino-acid chain; its full sequence is Tetrahydromethanopterin S-methyltransferase subunit G (72 aa).

Residues 48–68 (IGILYGGFIGLLLFLIYTVVS) traverse the membrane as a helical segment.

Belongs to the MtrG family. The complex is composed of 8 subunits; MtrA, MtrB, MtrC, MtrD, MtrE, MtrF, MtrG and MtrH.

The protein localises to the cell membrane. It carries out the reaction 5-methyl-5,6,7,8-tetrahydromethanopterin + coenzyme M + 2 Na(+)(in) = 5,6,7,8-tetrahydromethanopterin + methyl-coenzyme M + 2 Na(+)(out). It participates in one-carbon metabolism; methanogenesis from CO(2); methyl-coenzyme M from 5,10-methylene-5,6,7,8-tetrahydromethanopterin: step 2/2. Part of a complex that catalyzes the formation of methyl-coenzyme M and tetrahydromethanopterin from coenzyme M and methyl-tetrahydromethanopterin. This is an energy-conserving, sodium-ion translocating step. In Methanosarcina barkeri (strain Fusaro / DSM 804), this protein is Tetrahydromethanopterin S-methyltransferase subunit G.